Reading from the N-terminus, the 391-residue chain is Phosphoglycerate kinase (391 aa).

Substrate-binding positions include 21–23 (DLN), Arg36, 59–62 (HRGR), Arg113, and Arg146. ATP contacts are provided by residues Lys197, Glu314, and 340 to 343 (GGDT).

Belongs to the phosphoglycerate kinase family. In terms of assembly, monomer.

The protein resides in the cytoplasm. The catalysed reaction is (2R)-3-phosphoglycerate + ATP = (2R)-3-phospho-glyceroyl phosphate + ADP. Its pathway is carbohydrate degradation; glycolysis; pyruvate from D-glyceraldehyde 3-phosphate: step 2/5. In Ruthia magnifica subsp. Calyptogena magnifica, this protein is Phosphoglycerate kinase.